Reading from the N-terminus, the 319-residue chain is ATP-dependent 6-phosphofructokinase (319 aa).

Residue Gly-11 coordinates ATP. 21–25 (RAVVR) is a binding site for ADP. ATP is bound by residues 72 to 73 (RC) and 102 to 105 (GDGS). Asp-103 is a Mg(2+) binding site. A substrate-binding site is contributed by 125–127 (TID). Catalysis depends on Asp-127, which acts as the Proton acceptor. Arg-154 provides a ligand contact to ADP. Substrate contacts are provided by residues Arg-162 and 169 to 171 (MGR). Residues 185-187 (GAE), Arg-211, and 213-215 (KKH) contribute to the ADP site. Substrate is bound by residues Glu-222, Arg-243, and 249-252 (HMQR).

This sequence belongs to the phosphofructokinase type A (PFKA) family. ATP-dependent PFK group I subfamily. Prokaryotic clade 'B1' sub-subfamily. In terms of assembly, homotetramer. The cofactor is Mg(2+).

It localises to the cytoplasm. It carries out the reaction beta-D-fructose 6-phosphate + ATP = beta-D-fructose 1,6-bisphosphate + ADP + H(+). It functions in the pathway carbohydrate degradation; glycolysis; D-glyceraldehyde 3-phosphate and glycerone phosphate from D-glucose: step 3/4. Its activity is regulated as follows. Allosterically activated by ADP and other diphosphonucleosides, and allosterically inhibited by phosphoenolpyruvate. In terms of biological role, catalyzes the phosphorylation of D-fructose 6-phosphate to fructose 1,6-bisphosphate by ATP, the first committing step of glycolysis. The chain is ATP-dependent 6-phosphofructokinase from Macrococcus caseolyticus (strain JCSC5402) (Macrococcoides caseolyticum).